The primary structure comprises 295 residues: UDP-N-acetylenolpyruvoylglucosamine reductase (295 aa).

Residues 23 to 188 enclose the FAD-binding PCMH-type domain; the sequence is KVGGPADFLA…ISAKFALKPG (166 aa). Residue Arg-167 is part of the active site. Ser-217 acts as the Proton donor in catalysis. Residue Glu-287 is part of the active site.

Belongs to the MurB family. FAD serves as cofactor.

The protein localises to the cytoplasm. It catalyses the reaction UDP-N-acetyl-alpha-D-muramate + NADP(+) = UDP-N-acetyl-3-O-(1-carboxyvinyl)-alpha-D-glucosamine + NADPH + H(+). The protein operates within cell wall biogenesis; peptidoglycan biosynthesis. Cell wall formation. The protein is UDP-N-acetylenolpyruvoylglucosamine reductase of Streptococcus pyogenes serotype M3 (strain ATCC BAA-595 / MGAS315).